A 337-amino-acid chain; its full sequence is Pyridoxal 5'-phosphate synthase subunit PdxS (337 aa).

Residue aspartate 63 coordinates D-ribose 5-phosphate. Lysine 120 functions as the Schiff-base intermediate with D-ribose 5-phosphate in the catalytic mechanism. Glycine 192 contributes to the D-ribose 5-phosphate binding site. A D-glyceraldehyde 3-phosphate-binding site is contributed by lysine 204. Residues glycine 253 and 274-275 (GS) contribute to the D-ribose 5-phosphate site.

It belongs to the PdxS/SNZ family. In the presence of PdxT, forms a dodecamer of heterodimers.

It catalyses the reaction aldehydo-D-ribose 5-phosphate + D-glyceraldehyde 3-phosphate + L-glutamine = pyridoxal 5'-phosphate + L-glutamate + phosphate + 3 H2O + H(+). The protein operates within cofactor biosynthesis; pyridoxal 5'-phosphate biosynthesis. Catalyzes the formation of pyridoxal 5'-phosphate from ribose 5-phosphate (RBP), glyceraldehyde 3-phosphate (G3P) and ammonia. The ammonia is provided by the PdxT subunit. Can also use ribulose 5-phosphate and dihydroxyacetone phosphate as substrates, resulting from enzyme-catalyzed isomerization of RBP and G3P, respectively. In Aeropyrum pernix (strain ATCC 700893 / DSM 11879 / JCM 9820 / NBRC 100138 / K1), this protein is Pyridoxal 5'-phosphate synthase subunit PdxS.